Here is a 353-residue protein sequence, read N- to C-terminus: UPF0283 membrane protein Spro_2618 (353 aa).

3 consecutive transmembrane segments (helical) span residues 71–91 (MVTAGLTLFGVSVVAQGVQWV), 101–121 (IAMGGGVAGGLIVFAGVGSVV), and 214–234 (ESTLMIAVSPLAVVDMAFIAW).

Belongs to the UPF0283 family.

Its subcellular location is the cell inner membrane. In Serratia proteamaculans (strain 568), this protein is UPF0283 membrane protein Spro_2618.